The following is a 247-amino-acid chain: Small ribosomal subunit protein uS2 (247 aa).

This sequence belongs to the universal ribosomal protein uS2 family.

The sequence is that of Small ribosomal subunit protein uS2 from Cupriavidus taiwanensis (strain DSM 17343 / BCRC 17206 / CCUG 44338 / CIP 107171 / LMG 19424 / R1) (Ralstonia taiwanensis (strain LMG 19424)).